The sequence spans 453 residues: Chromosomal replication initiator protein DnaA (453 aa).

The interval 1-74 is domain I, interacts with DnaA modulators; it reads MKEKQFWNRI…GFEIYDAEIT (74 aa). Residues 74–113 are domain II; the sequence is TPHYIFTKPQDTTSSQVEEATNLTLYDYSPKLVSIPYSDT. Positions 114 to 331 are domain III, AAA+ region; it reads GLKEKYTFDN…GAINDITLIA (218 aa). ATP contacts are provided by G158, G160, K161, and T162. The interval 332 to 453 is domain IV, binds dsDNA; sequence RVKKIKDITI…EIESIKKKIK (122 aa).

This sequence belongs to the DnaA family. As to quaternary structure, oligomerizes as a right-handed, spiral filament on DNA at oriC. Interacts (via domains I and III) with CcrZ.

It is found in the cytoplasm. CcrZ stimulates DnaA, possibly by phosphorylation of an intermediate molecule, to initiate DNA replication. Functionally, plays an essential role in the initiation and regulation of chromosomal replication. ATP-DnaA binds to the origin of replication (oriC) to initiate formation of the DNA replication initiation complex once per cell cycle. Binds the DnaA box (a 9 base pair repeat at the origin) and separates the double-stranded (ds)DNA. Forms a right-handed helical filament on oriC DNA; dsDNA binds to the exterior of the filament while single-stranded (ss)DNA is stabiized in the filament's interior. The ATP-DnaA-oriC complex binds and stabilizes one strand of the AT-rich DNA unwinding element (DUE), permitting loading of DNA polymerase. After initiation quickly degrades to an ADP-DnaA complex that is not apt for DNA replication. Binds acidic phospholipids. Its function is as follows. Mutations in this gene suppress a deletion of cell cycle regulator ccrZ. In Streptococcus pneumoniae serotype 2 (strain D39 / NCTC 7466), this protein is Chromosomal replication initiator protein DnaA.